The sequence spans 336 residues: Serpentine receptor class alpha-10 (336 aa).

The Extracellular portion of the chain corresponds to 1–28 (MGPITANSSKCATEDQMILQTSLLLRIN). The chain crosses the membrane as a helical span at residues 29-49 (VIIMTIVAIITFILTYKALFI). Residues 50 to 61 (LKIRPIFHSSTK) lie on the Cytoplasmic side of the membrane. Residues 62-82 (ILLYTSLLFVNVHAVIFMVIQ) form a helical membrane-spanning segment. The Extracellular portion of the chain corresponds to 83–107 (NTALIRSFTLSDKPCEIMRTTLECR). A helical membrane pass occupies residues 108 to 128 (FQNHVLIFGIAGVNFNQFGLT). At 129–148 (VDRLLATIIPQSYSHMGALP) the chain is on the cytoplasmic side. Residues 149–169 (GVILSVLVVACSIAAPLIIAI) traverse the membrane as a helical segment. The Extracellular segment spans residues 170-192 (GDPYDDIVPNCFFFPEHSAPRAN). A helical transmembrane segment spans residues 193–213 (IFLVTLSTLVITSIFLNFIII). Over 214 to 243 (YANKKLEKGCRTRFYVTQRYQKREALISTR) the chain is Cytoplasmic. A helical transmembrane segment spans residues 244 to 264 (IISYIAASQFLGLTLYSTMVL). At 265–280 (TLRLHKSMIPISIYHN) the chain is on the extracellular side. The helical transmembrane segment at 281–301 (MVWWAYTVPFAAVSLPALLIY) threads the bilayer. Residues 302 to 336 (RINQVGSNRKRVINRITAKVETQEEHMKSLKELWA) are Cytoplasmic-facing.

Belongs to the nematode receptor-like protein sra family. In terms of tissue distribution, expressed in the URX sensory neuron, the ALA interneuron and in additional interneurons, pharyngeal neurons and muscle.

Its subcellular location is the membrane. In Caenorhabditis elegans, this protein is Serpentine receptor class alpha-10 (sra-10).